Reading from the N-terminus, the 126-residue chain is SPbeta prophage-derived uncharacterized protein YorC (126 aa).

The chain is SPbeta prophage-derived uncharacterized protein YorC (yorC) from Bacillus subtilis (strain 168).